The sequence spans 276 residues: MATNGCLISLPPFFTTTKSISSYPFLSTQLKPISLSSSLPTLLSLNKRTTQFPTFVSVLSEDDNTLVLDDQEQGGDFPSFVGEAGETEEYQEPSEDAKLFVGNLPYDIDSEGLAQLFQQAGVVEIAEVIYNRETDRSRGFGFVTMSTVEEADKAVELYSQYDLNGRLLTVNKAAPRGSRPERAPRTFQPTYRIYVGNIPWDIDDARLEQVFSEHGKVVSARVVFDRESGRSRGFGFVTMSSEAEMSEAIANLDGQTLDGRTIRVNAAEERPRRNTY.

Residues 1–57 constitute a chloroplast transit peptide; the sequence is MATNGCLISLPPFFTTTKSISSYPFLSTQLKPISLSSSLPTLLSLNKRTTQFPTFVS. RRM domains are found at residues 97–175 and 191–269; these read AKLF…KAAP and YRIY…AAEE.

Its subcellular location is the plastid. It localises to the chloroplast. In terms of biological role, probably involved in the 3'-end processing of chloroplast mRNA's. The protein is 28 kDa ribonucleoprotein, chloroplastic of Nicotiana sylvestris (Wood tobacco).